The primary structure comprises 127 residues: MRRNGKERKDRTSGGSQRPYQEIVGRTWIFRGSHRGRVTKRNIIWHELIGLKVRVVNSMHPGFVGIEGYVVDETRNMLVIVGDKVWKVPKDVCIFEFETEDGAKIKIPGERLVGRPEMRLKKRWRKW.

Belongs to the eukaryotic/archaeal RNase P protein component 1 family. In terms of assembly, consists of a catalytic RNA component and at least 4-5 protein subunits.

Its subcellular location is the cytoplasm. It catalyses the reaction Endonucleolytic cleavage of RNA, removing 5'-extranucleotides from tRNA precursor.. Its function is as follows. Part of ribonuclease P, a protein complex that generates mature tRNA molecules by cleaving their 5'-ends. This chain is Ribonuclease P protein component 1, found in Pyrococcus abyssi (strain GE5 / Orsay).